Reading from the N-terminus, the 412-residue chain is Serine hydroxymethyltransferase (412 aa).

(6S)-5,6,7,8-tetrahydrofolate is bound by residues Leu-116 and 120–122; that span reads GHL. Lys-225 is modified (N6-(pyridoxal phosphate)lysine). Residues Glu-241 and 350-352 each bind (6S)-5,6,7,8-tetrahydrofolate; that span reads SPF.

It belongs to the SHMT family. In terms of assembly, homodimer. Pyridoxal 5'-phosphate is required as a cofactor.

Its subcellular location is the cytoplasm. The enzyme catalyses (6R)-5,10-methylene-5,6,7,8-tetrahydrofolate + glycine + H2O = (6S)-5,6,7,8-tetrahydrofolate + L-serine. It participates in one-carbon metabolism; tetrahydrofolate interconversion. It functions in the pathway amino-acid biosynthesis; glycine biosynthesis; glycine from L-serine: step 1/1. In terms of biological role, catalyzes the reversible interconversion of serine and glycine with tetrahydrofolate (THF) serving as the one-carbon carrier. This reaction serves as the major source of one-carbon groups required for the biosynthesis of purines, thymidylate, methionine, and other important biomolecules. Also exhibits THF-independent aldolase activity toward beta-hydroxyamino acids, producing glycine and aldehydes, via a retro-aldol mechanism. The protein is Serine hydroxymethyltransferase of Enterococcus faecalis (strain ATCC 700802 / V583).